A 248-amino-acid chain; its full sequence is Leucyl/phenylalanyl-tRNA--protein transferase (248 aa).

This sequence belongs to the L/F-transferase family.

It localises to the cytoplasm. It catalyses the reaction N-terminal L-lysyl-[protein] + L-leucyl-tRNA(Leu) = N-terminal L-leucyl-L-lysyl-[protein] + tRNA(Leu) + H(+). The catalysed reaction is N-terminal L-arginyl-[protein] + L-leucyl-tRNA(Leu) = N-terminal L-leucyl-L-arginyl-[protein] + tRNA(Leu) + H(+). The enzyme catalyses L-phenylalanyl-tRNA(Phe) + an N-terminal L-alpha-aminoacyl-[protein] = an N-terminal L-phenylalanyl-L-alpha-aminoacyl-[protein] + tRNA(Phe). Functions in the N-end rule pathway of protein degradation where it conjugates Leu, Phe and, less efficiently, Met from aminoacyl-tRNAs to the N-termini of proteins containing an N-terminal arginine or lysine. The polypeptide is Leucyl/phenylalanyl-tRNA--protein transferase (Ralstonia pickettii (strain 12J)).